The following is a 392-amino-acid chain: Formate-dependent phosphoribosylglycinamide formyltransferase (392 aa).

N(1)-(5-phospho-beta-D-ribosyl)glycinamide-binding positions include 22–23 and E82; that span reads EL. Residues R114, K155, 160–165, 195–198, and E203 each bind ATP; these read SSGKGQ and EGVV. The region spanning 119-308 is the ATP-grasp domain; it reads RLAAEELGLP…EFALHVRAFL (190 aa). Mg(2+)-binding residues include E267 and E279. Residues D286, K355, and 362-363 each bind N(1)-(5-phospho-beta-D-ribosyl)glycinamide; that span reads RR.

It belongs to the PurK/PurT family. In terms of assembly, homodimer.

It catalyses the reaction N(1)-(5-phospho-beta-D-ribosyl)glycinamide + formate + ATP = N(2)-formyl-N(1)-(5-phospho-beta-D-ribosyl)glycinamide + ADP + phosphate + H(+). Its pathway is purine metabolism; IMP biosynthesis via de novo pathway; N(2)-formyl-N(1)-(5-phospho-D-ribosyl)glycinamide from N(1)-(5-phospho-D-ribosyl)glycinamide (formate route): step 1/1. In terms of biological role, involved in the de novo purine biosynthesis. Catalyzes the transfer of formate to 5-phospho-ribosyl-glycinamide (GAR), producing 5-phospho-ribosyl-N-formylglycinamide (FGAR). Formate is provided by PurU via hydrolysis of 10-formyl-tetrahydrofolate. This Salmonella choleraesuis (strain SC-B67) protein is Formate-dependent phosphoribosylglycinamide formyltransferase.